The following is a 693-amino-acid chain: Auxin response factor 10 (693 aa).

The TF-B3 DNA-binding region spans Phe115–Lys217. The 89-residue stretch at Thr580–Thr668 folds into the PB1 domain.

This sequence belongs to the ARF family. In terms of assembly, homodimers and heterodimers. In terms of tissue distribution, expressed in the whole plant.

It localises to the nucleus. Functionally, auxin response factors (ARFs) are transcriptional factors that bind specifically to the DNA sequence 5'-TGTCTC-3' found in the auxin-responsive promoter elements (AuxREs). Could act as transcriptional activator or repressor. Formation of heterodimers with Aux/IAA proteins may alter their ability to modulate early auxin response genes expression. In Arabidopsis thaliana (Mouse-ear cress), this protein is Auxin response factor 10 (ARF10).